We begin with the raw amino-acid sequence, 84 residues long: Keratin-associated protein 19-4 (84 aa).

Belongs to the KRTAP type 19 family. As to quaternary structure, interacts with hair keratins.

In terms of biological role, in the hair cortex, hair keratin intermediate filaments are embedded in an interfilamentous matrix, consisting of hair keratin-associated proteins (KRTAP), which are essential for the formation of a rigid and resistant hair shaft through their extensive disulfide bond cross-linking with abundant cysteine residues of hair keratins. The matrix proteins include the high-sulfur and high-glycine-tyrosine keratins. The protein is Keratin-associated protein 19-4 (KRTAP19-4) of Homo sapiens (Human).